Here is a 229-residue protein sequence, read N- to C-terminus: MKFPILIINLKAYGEAAGKKALEIAKAAEKVAKELGVNIAVAPNHLELALVAQSVEIPVYAQGADVETPGAYTAHIAVDNIKAVGASGLILNHSEAPLALNQLSKLAARAKSIGLDVVICAPDPVTSLAAAALGPHAVAVEPPELIGTGKAVSKYKPETIIETVRLVTKHFPNVVVITGAGIETGEDVEAALKLGTKGVLLASAAVKAKDHYQKIFELAKPLTVAAEPP.

Substrate is bound at residue 9-11; sequence NLK. H93 (electrophile) is an active-site residue. The active-site Proton acceptor is the E141. Residues I146, G181, and 202–203 contribute to the substrate site; that span reads AS.

This sequence belongs to the triosephosphate isomerase family. As to quaternary structure, homotetramer; dimer of dimers.

It is found in the cytoplasm. The enzyme catalyses D-glyceraldehyde 3-phosphate = dihydroxyacetone phosphate. The protein operates within carbohydrate biosynthesis; gluconeogenesis. It participates in carbohydrate degradation; glycolysis; D-glyceraldehyde 3-phosphate from glycerone phosphate: step 1/1. Its function is as follows. Involved in the gluconeogenesis. Catalyzes stereospecifically the conversion of dihydroxyacetone phosphate (DHAP) to D-glyceraldehyde-3-phosphate (G3P). This chain is Triosephosphate isomerase, found in Pyrobaculum islandicum (strain DSM 4184 / JCM 9189 / GEO3).